A 419-amino-acid polypeptide reads, in one-letter code: Appendage-associated protein (419 aa).

A signal peptide spans 1-39 (MIVTYGTVGCPVSRGGSPGCGRRIAEELRLAEDARLRLA). Residues 232 to 262 (ERQKAQRRREERAAKAREELRKELNDIDAKW) adopt a coiled-coil conformation.

The protein resides in the secreted. Associates with actin filament appendages that are formed in the inclusion appendages of the parasitophorous vacuole during infection of the host erythrocyte. The protein is Appendage-associated protein of Anaplasma marginale (strain St. Maries).